Reading from the N-terminus, the 363-residue chain is 3-isopropylmalate dehydrogenase (363 aa).

77 to 90 serves as a coordination point for NAD(+); the sequence is GPKWQHLPPDQQPE. 4 residues coordinate substrate: Arg98, Arg108, Arg137, and Asp226. Mg(2+) contacts are provided by Asp226, Asp250, and Asp254. 284–296 is an NAD(+) binding site; that stretch reads GSAPDIAGKNIAN.

It belongs to the isocitrate and isopropylmalate dehydrogenases family. LeuB type 1 subfamily. Homodimer. Requires Mg(2+) as cofactor. The cofactor is Mn(2+).

The protein localises to the cytoplasm. The enzyme catalyses (2R,3S)-3-isopropylmalate + NAD(+) = 4-methyl-2-oxopentanoate + CO2 + NADH. It functions in the pathway amino-acid biosynthesis; L-leucine biosynthesis; L-leucine from 3-methyl-2-oxobutanoate: step 3/4. Catalyzes the oxidation of 3-carboxy-2-hydroxy-4-methylpentanoate (3-isopropylmalate) to 3-carboxy-4-methyl-2-oxopentanoate. The product decarboxylates to 4-methyl-2 oxopentanoate. The protein is 3-isopropylmalate dehydrogenase of Buchnera aphidicola subsp. Pemphigus spyrothecae.